Reading from the N-terminus, the 501-residue chain is Ribose import ATP-binding protein RbsA (501 aa).

2 ABC transporter domains span residues 5–241 (LQLK…VGRK) and 252–495 (APGE…VGKL). 37-44 (GENGAGKS) contacts ATP.

Belongs to the ABC transporter superfamily. Ribose importer (TC 3.A.1.2.1) family. In terms of assembly, the complex is composed of an ATP-binding protein (RbsA), two transmembrane proteins (RbsC) and a solute-binding protein (RbsB).

It is found in the cell inner membrane. The enzyme catalyses D-ribose(out) + ATP + H2O = D-ribose(in) + ADP + phosphate + H(+). Part of the ABC transporter complex RbsABC involved in ribose import. Responsible for energy coupling to the transport system. This chain is Ribose import ATP-binding protein RbsA, found in Salmonella paratyphi A (strain ATCC 9150 / SARB42).